The chain runs to 65 residues: Ringhalexin (65 aa).

4 cysteine pairs are disulfide-bonded: Cys-3-Cys-24, Cys-17-Cys-42, Cys-46-Cys-57, and Cys-58-Cys-63.

In terms of tissue distribution, expressed by the venom gland.

The protein localises to the secreted. Functionally, has anticoagulant activity, since it is able to inhibit the activation of coagulation factor X (F10) by coagulation factor VIIa (F7) (IC(50)=123.8 nM). Also shows weak irreversible neurotoxicity. In Hemachatus haemachatus (Rinkhals), this protein is Ringhalexin.